The primary structure comprises 938 residues: Isoleucine--tRNA ligase (938 aa).

The 'HIGH' region motif lies at 58 to 68; that stretch reads PYANGSIHIGH. Glu-561 contacts L-isoleucyl-5'-AMP. Positions 602 to 606 match the 'KMSKS' region motif; the sequence is KMSKS. Residue Lys-605 coordinates ATP. Zn(2+) contacts are provided by Cys-901, Cys-904, Cys-921, and Cys-924.

Belongs to the class-I aminoacyl-tRNA synthetase family. IleS type 1 subfamily. As to quaternary structure, monomer. Zn(2+) is required as a cofactor.

It is found in the cytoplasm. The enzyme catalyses tRNA(Ile) + L-isoleucine + ATP = L-isoleucyl-tRNA(Ile) + AMP + diphosphate. Its function is as follows. Catalyzes the attachment of isoleucine to tRNA(Ile). As IleRS can inadvertently accommodate and process structurally similar amino acids such as valine, to avoid such errors it has two additional distinct tRNA(Ile)-dependent editing activities. One activity is designated as 'pretransfer' editing and involves the hydrolysis of activated Val-AMP. The other activity is designated 'posttransfer' editing and involves deacylation of mischarged Val-tRNA(Ile). The polypeptide is Isoleucine--tRNA ligase (Klebsiella pneumoniae (strain 342)).